A 273-amino-acid polypeptide reads, in one-letter code: DNA replication complex GINS protein psf2 (273 aa).

Disordered regions lie at residues 88-110 (KEDP…SQPG) and 240-273 (ASAE…DMGL). A compositionally biased stretch (basic and acidic residues) spans 244-257 (ATRREEEEEARRGG). The segment covering 261–273 (GDGDEDSDEDMGL) has biased composition (acidic residues).

It belongs to the GINS2/PSF2 family. As to quaternary structure, component of the GINS complex which is a heterotetramer of div-26/sld5, drc-1/psf1, drc-2/psf2 and drc-3/psf3.

The protein localises to the nucleus. The GINS complex plays an essential role in the initiation of DNA replication. Has a role in chromosome segregation. The sequence is that of DNA replication complex GINS protein psf2 (drc-2) from Neurospora crassa (strain ATCC 24698 / 74-OR23-1A / CBS 708.71 / DSM 1257 / FGSC 987).